The primary structure comprises 359 residues: Phosphoserine aminotransferase (359 aa).

An L-glutamate-binding site is contributed by Arg41. Pyridoxal 5'-phosphate contacts are provided by residues 75 to 76, Trp101, Thr152, Asp171, and Gln194; that span reads AS. Lys195 bears the N6-(pyridoxal phosphate)lysine mark. 236 to 237 provides a ligand contact to pyridoxal 5'-phosphate; that stretch reads NT.

The protein belongs to the class-V pyridoxal-phosphate-dependent aminotransferase family. SerC subfamily. As to quaternary structure, homodimer. Pyridoxal 5'-phosphate serves as cofactor.

The protein resides in the cytoplasm. It catalyses the reaction O-phospho-L-serine + 2-oxoglutarate = 3-phosphooxypyruvate + L-glutamate. The catalysed reaction is 4-(phosphooxy)-L-threonine + 2-oxoglutarate = (R)-3-hydroxy-2-oxo-4-phosphooxybutanoate + L-glutamate. It functions in the pathway amino-acid biosynthesis; L-serine biosynthesis; L-serine from 3-phospho-D-glycerate: step 2/3. Its pathway is cofactor biosynthesis; pyridoxine 5'-phosphate biosynthesis; pyridoxine 5'-phosphate from D-erythrose 4-phosphate: step 3/5. In terms of biological role, catalyzes the reversible conversion of 3-phosphohydroxypyruvate to phosphoserine and of 3-hydroxy-2-oxo-4-phosphonooxybutanoate to phosphohydroxythreonine. The protein is Phosphoserine aminotransferase of Acinetobacter baumannii (strain ACICU).